The chain runs to 199 residues: Probable cobalt-precorrin-6B C(15)-methyltransferase (decarboxylating) (199 aa).

Residues Thr-24, 48 to 52 (GCGTG), Asp-72, and Ala-101 contribute to the S-adenosyl-L-methionine site.

The protein belongs to the methyltransferase superfamily. Archaeal-type CbiT family.

It carries out the reaction Co-precorrin-6B + S-adenosyl-L-methionine = Co-precorrin-7 + S-adenosyl-L-homocysteine + CO2. The protein operates within cofactor biosynthesis; adenosylcobalamin biosynthesis; cob(II)yrinate a,c-diamide from sirohydrochlorin (anaerobic route): step 8/10. Catalyzes the methylation of C-15 in cobalt-precorrin-6B followed by the decarboxylation of C-12 to form cobalt-precorrin-7. This is Probable cobalt-precorrin-6B C(15)-methyltransferase (decarboxylating) from Saccharolobus solfataricus (strain ATCC 35092 / DSM 1617 / JCM 11322 / P2) (Sulfolobus solfataricus).